A 454-amino-acid chain; its full sequence is Putative serine carboxypeptidase-like 23 (454 aa).

The first 22 residues, 1-22 (MARIHLIIILLVISSTSSSSSS), serve as a signal peptide directing secretion. N-linked (GlcNAc...) asparagine glycosylation is found at N52, N102, and N136. Cystine bridges form between C85–C338, C247–C258, and C282–C306. The active site involves S178. N-linked (GlcNAc...) asparagine glycosylation is found at N287 and N327. Active-site residues include D375 and H427.

This sequence belongs to the peptidase S10 family. Expression not detected.

It localises to the secreted. Its function is as follows. Probable carboxypeptidase. This chain is Putative serine carboxypeptidase-like 23 (SCPL23), found in Arabidopsis thaliana (Mouse-ear cress).